The following is a 420-amino-acid chain: MNIFNNNLHETDKEINEIIKHEKLRQSSVIELIASENFVSPAVLEAQGSILTNKYAEGYSGKRFYNGCEEVDKAENLAIERVKKLFNCKYANVQPHSGSQANQAVYLTLLQPGDTILGMSLDSGGHLTHGASPNMSGKWFNAVSYGVNKKTYLIDYDEIERLAVLHKPKLLIAGFSAYPRNIDFTRFREIADKVGAYFMADIAHIAGLVATGEHQSPISYAHVVTSTTHKTLRGPRGGLVLSDDEEIGKKINSALFPGLQGGPLMHIVAAKAVAFLESLQPEYKSYIKQIISNAKALASSLQERGYDILTGGTDNHIVLVDLRKNGITGKLAANSLDNAGITCNKNAIPFDETSPFITSGIRLGTPACTTRGFKEQDFVSVGHMVADILDGLKNNKDNTKAEQQVLHKVTKLIKLFPFYD.

Residues leucine 121 and 125-127 (GHL) contribute to the (6S)-5,6,7,8-tetrahydrofolate site. Residue lysine 230 is modified to N6-(pyridoxal phosphate)lysine. (6S)-5,6,7,8-tetrahydrofolate-binding positions include glutamate 246 and 354-356 (SPF).

It belongs to the SHMT family. In terms of assembly, homodimer. Requires pyridoxal 5'-phosphate as cofactor.

It localises to the cytoplasm. It carries out the reaction (6R)-5,10-methylene-5,6,7,8-tetrahydrofolate + glycine + H2O = (6S)-5,6,7,8-tetrahydrofolate + L-serine. The protein operates within one-carbon metabolism; tetrahydrofolate interconversion. It participates in amino-acid biosynthesis; glycine biosynthesis; glycine from L-serine: step 1/1. Its function is as follows. Catalyzes the reversible interconversion of serine and glycine with tetrahydrofolate (THF) serving as the one-carbon carrier. This reaction serves as the major source of one-carbon groups required for the biosynthesis of purines, thymidylate, methionine, and other important biomolecules. Also exhibits THF-independent aldolase activity toward beta-hydroxyamino acids, producing glycine and aldehydes, via a retro-aldol mechanism. The polypeptide is Serine hydroxymethyltransferase (Rickettsia akari (strain Hartford)).